Consider the following 82-residue polypeptide: Large ribosomal subunit protein uL29 (82 aa).

The protein belongs to the universal ribosomal protein uL29 family.

The chain is Large ribosomal subunit protein uL29 from Trichodesmium erythraeum (strain IMS101).